The chain runs to 409 residues: Argininosuccinate synthase (409 aa).

ATP contacts are provided by residues 12-20 (AYSGGLDTS) and alanine 39. Positions 90 and 95 each coordinate L-citrulline. Glycine 120 contacts ATP. Positions 122, 126, and 127 each coordinate L-aspartate. Asparagine 126 contributes to the L-citrulline binding site. Residues arginine 130, serine 181, serine 190, glutamate 266, and tyrosine 278 each contribute to the L-citrulline site.

This sequence belongs to the argininosuccinate synthase family. Type 1 subfamily. As to quaternary structure, homotetramer.

It localises to the cytoplasm. The catalysed reaction is L-citrulline + L-aspartate + ATP = 2-(N(omega)-L-arginino)succinate + AMP + diphosphate + H(+). Its pathway is amino-acid biosynthesis; L-arginine biosynthesis; L-arginine from L-ornithine and carbamoyl phosphate: step 2/3. In Gluconacetobacter diazotrophicus (strain ATCC 49037 / DSM 5601 / CCUG 37298 / CIP 103539 / LMG 7603 / PAl5), this protein is Argininosuccinate synthase.